Consider the following 119-residue polypeptide: uncharacterized protein (119 aa).

The segment at 1-20 is disordered; it reads MPHLAAEAHTWPPHISHSTL. Residues 74-94 traverse the membrane as a helical segment; it reads LLFVVHQGHIGTGLIVFIICW.

It localises to the membrane. This is an uncharacterized protein from Saccharomyces cerevisiae (strain ATCC 204508 / S288c) (Baker's yeast).